Consider the following 188-residue polypeptide: Probable nicotinate-nucleotide adenylyltransferase (188 aa).

Belongs to the NadD family.

It catalyses the reaction nicotinate beta-D-ribonucleotide + ATP + H(+) = deamido-NAD(+) + diphosphate. The protein operates within cofactor biosynthesis; NAD(+) biosynthesis; deamido-NAD(+) from nicotinate D-ribonucleotide: step 1/1. Catalyzes the reversible adenylation of nicotinate mononucleotide (NaMN) to nicotinic acid adenine dinucleotide (NaAD). The polypeptide is Probable nicotinate-nucleotide adenylyltransferase (Listeria innocua serovar 6a (strain ATCC BAA-680 / CLIP 11262)).